The primary structure comprises 73 residues: Putative antitoxin VapB9 (73 aa).

Functionally, antitoxin component of a possible type II toxin-antitoxin (TA) system. The cognate toxin is VapC9. This is Putative antitoxin VapB9 (vapB9) from Mycobacterium tuberculosis (strain CDC 1551 / Oshkosh).